The chain runs to 707 residues: Integrator complex subunit 13 (707 aa).

The span at 565–625 shows a compositional bias: basic and acidic residues; sequence PPEEEERKKR…AEAEVIKDSP (61 aa). A disordered region spans residues 565–651; that stretch reads PPEEEERKKR…TGPAEKSKGP (87 aa). Positions 567–622 form a coiled coil; the sequence is EEEERKKRGRKREDKEEKAEKPPKENEHEKKWQESERVKSVLDREKEDLAEAEVIK. The short motif at 573–583 is the Nuclear localization signal (NLS) element; that stretch reads KRGRKREDKEE. The segment at 650–695 is cleavage module binding motif (CMBM); sequence GPMSLLSLWSSRINTANSRKHQEFVGRLNSVNNKAELYQHLKEENG.

This sequence belongs to the Integrator subunit 13 family. As to quaternary structure, component of the Integrator complex, composed of core subunits INTS1, INTS2, INTS3, INTS4, INTS5, INTS6, INTS7, INTS8, INTS9/RC74, INTS10, INTS11/CPSF3L, INTS12, INTS13, INTS14 and INTS15. The core complex associates with protein phosphatase 2A subunits PPP2CA and PPP2R1A, to form the Integrator-PP2A (INTAC) complex. INTS13 is part of the tail subcomplex, composed of INTS10, INTS13, INTS14 and INTS15.

It is found in the nucleus. It localises to the cytoplasm. In terms of biological role, component of the integrator complex, a multiprotein complex that terminates RNA polymerase II (Pol II) transcription in the promoter-proximal region of genes. The integrator complex provides a quality checkpoint during transcription elongation by driving premature transcription termination of transcripts that are unfavorably configured for transcriptional elongation: the complex terminates transcription by (1) catalyzing dephosphorylation of the C-terminal domain (CTD) of Pol II subunit POLR2A/RPB1 and SUPT5H/SPT5, (2) degrading the exiting nascent RNA transcript via endonuclease activity and (3) promoting the release of Pol II from bound DNA. The integrator complex is also involved in terminating the synthesis of non-coding Pol II transcripts, such as enhancer RNAs (eRNAs), small nuclear RNAs (snRNAs), telomerase RNAs and long non-coding RNAs (lncRNAs). Within the integrator complex, INTS13 is part of the integrator tail module and acts as a platform for the recruitment of transcription factors at promoters. The sequence is that of Integrator complex subunit 13 from Xenopus tropicalis (Western clawed frog).